Consider the following 371-residue polypeptide: Forkhead box protein J1.2 (371 aa).

Disordered stretches follow at residues 45–74 and 80–99; these read ANSR…APRT and VAVP…PVQE. The fork-head DNA-binding region spans 109 to 203; the sequence is KPPYSYATLI…VNGVLKRRRM (95 aa). Positions 228–248 are disordered; sequence PSSHHMQHISGGHRQSRRYEK.

It belongs to the FOXJ1 family. In terms of tissue distribution, expressed diffusely through much of gastrula and neurula stage embryos. At stage 23 (late neurula), limited to the otic vesicle. By stage 28 (tailbud), also expressed transiently in the presumptive nephrostomes of the pronephros. At stage 35 (early tadpole), expressed broadly in the head and strongly expressed in the developing gill structures.

Its subcellular location is the nucleus. Functionally, key transcription factor required for motile ciliogenesis. Activates genes essential for motile cilia formation and function. This chain is Forkhead box protein J1.2, found in Xenopus tropicalis (Western clawed frog).